The chain runs to 504 residues: Maturase K (504 aa).

The protein belongs to the intron maturase 2 family. MatK subfamily.

It localises to the plastid. Its subcellular location is the chloroplast. In terms of biological role, usually encoded in the trnK tRNA gene intron. Probably assists in splicing its own and other chloroplast group II introns. The protein is Maturase K of Adenostoma fasciculatum (Chamise).